Here is a 321-residue protein sequence, read N- to C-terminus: Ribosomal RNA small subunit methyltransferase H (321 aa).

S-adenosyl-L-methionine-binding positions include 33–35, Asp58, Phe85, Asp111, and Gln118; that span reads AGH.

The protein belongs to the methyltransferase superfamily. RsmH family.

The protein localises to the cytoplasm. It catalyses the reaction cytidine(1402) in 16S rRNA + S-adenosyl-L-methionine = N(4)-methylcytidine(1402) in 16S rRNA + S-adenosyl-L-homocysteine + H(+). Functionally, specifically methylates the N4 position of cytidine in position 1402 (C1402) of 16S rRNA. This is Ribosomal RNA small subunit methyltransferase H from Chloroherpeton thalassium (strain ATCC 35110 / GB-78).